Reading from the N-terminus, the 417-residue chain is Probable pectate lyase 20 (417 aa).

An N-terminal signal peptide occupies residues 1–25; the sequence is MAVTQILVVFASALLLSMFFTGVDS. Residues N29 and N53 are each glycosylated (N-linked (GlcNAc...) asparagine). The Ca(2+) site is built by D215, D239, and D243. R295 is an active-site residue.

The protein belongs to the polysaccharide lyase 1 family. Ca(2+) serves as cofactor.

It carries out the reaction Eliminative cleavage of (1-&gt;4)-alpha-D-galacturonan to give oligosaccharides with 4-deoxy-alpha-D-galact-4-enuronosyl groups at their non-reducing ends.. It participates in glycan metabolism; pectin degradation; 2-dehydro-3-deoxy-D-gluconate from pectin: step 2/5. The chain is Probable pectate lyase 20 from Arabidopsis thaliana (Mouse-ear cress).